The primary structure comprises 66 residues: Large ribosomal subunit protein bL31 (66 aa).

Residues Cys16, Cys18, Cys36, and Cys39 each contribute to the Zn(2+) site.

Belongs to the bacterial ribosomal protein bL31 family. Type A subfamily. As to quaternary structure, part of the 50S ribosomal subunit. It depends on Zn(2+) as a cofactor.

Binds the 23S rRNA. The sequence is that of Large ribosomal subunit protein bL31 from Geobacillus sp. (strain WCH70).